A 515-amino-acid polypeptide reads, in one-letter code: Heavy metal-associated isoprenylated plant protein 41 (515 aa).

One can recognise an HMA domain in the interval 376-444 (KQRIVLKMDM…KVCMTTIITV (69 aa)). Position 512 is a cysteine methyl ester (Cys-512). Cys-512 carries S-farnesyl cysteine lipidation. Positions 513–515 (RIL) are cleaved as a propeptide — removed in mature form.

This sequence belongs to the HIPP family.

Heavy-metal-binding protein. The polypeptide is Heavy metal-associated isoprenylated plant protein 41 (Arabidopsis thaliana (Mouse-ear cress)).